Here is a 453-residue protein sequence, read N- to C-terminus: Serine/threonine-protein phosphatase 2A 55 kDa regulatory subunit B delta isoform (453 aa).

4 WD repeats span residues 32–71 (AEADIISTVEFNYSGDLLATGDKGGRVVIFQREQENKSRP), 97–138 (EIEE…KRAE), 181–219 (AHTYHINSISVNSDHETYLSADDLRINLWHLEITDRSFN), and 230–270 (ELTE…LCDR). Phosphoserine is present on Ser-285. WD repeat units follow at residues 289–327 (EIISSISDVKFSHSGRYMMTRDYLSVKVWDLNMESRPVE), 344–385 (ENDC…DVTL), and 420–452 (DFNKKILHTAWHPVDNVIAVAATNNLYIFQDKI). Tyr-305 carries the post-translational modification Phosphotyrosine. Thr-308 carries the post-translational modification Phosphothreonine.

It belongs to the phosphatase 2A regulatory subunit B family. PP2A consists of a common heterodimeric core enzyme, composed of a 36 kDa catalytic subunit (subunit C) and a 65 kDa constant regulatory subunit (PR65 or subunit A), that associates with a variety of regulatory subunits. Proteins that associate with the core dimer include three families of regulatory subunits B (the R2/B/PR55/B55, R3/B''/PR72/PR130/PR59 and R5/B'/B56 families), the 48 kDa variable regulatory subunit, viral proteins, and cell signaling molecules. Interacts with ENSA (when phosphorylated at 'Ser-67') and ARPP19 (when phosphorylated at 'Ser-62'), leading to inhibit PP2A activity. Interacts with IER5.

It is found in the cytoplasm. In terms of biological role, substrate-recognition subunit of protein phosphatase 2A (PP2A) that plays a key role in cell cycle by controlling mitosis entry and exit. Involved in chromosome clustering during late mitosis by mediating dephosphorylation of MKI67. The activity of PP2A complexes containing PPP2R2D (PR55-delta) fluctuate during the cell cycle: the activity is high in interphase and low in mitosis. The chain is Serine/threonine-protein phosphatase 2A 55 kDa regulatory subunit B delta isoform (PPP2R2D) from Homo sapiens (Human).